Consider the following 426-residue polypeptide: Serine--tRNA ligase (426 aa).

233 to 235 (TSE) is a binding site for L-serine. An ATP-binding site is contributed by 264–266 (RSE). Residue glutamate 287 participates in L-serine binding. 351–354 (EISS) is an ATP binding site. Serine 387 provides a ligand contact to L-serine.

Belongs to the class-II aminoacyl-tRNA synthetase family. Type-1 seryl-tRNA synthetase subfamily. As to quaternary structure, homodimer. The tRNA molecule binds across the dimer.

Its subcellular location is the cytoplasm. The enzyme catalyses tRNA(Ser) + L-serine + ATP = L-seryl-tRNA(Ser) + AMP + diphosphate + H(+). It catalyses the reaction tRNA(Sec) + L-serine + ATP = L-seryl-tRNA(Sec) + AMP + diphosphate + H(+). The protein operates within aminoacyl-tRNA biosynthesis; selenocysteinyl-tRNA(Sec) biosynthesis; L-seryl-tRNA(Sec) from L-serine and tRNA(Sec): step 1/1. Functionally, catalyzes the attachment of serine to tRNA(Ser). Is also able to aminoacylate tRNA(Sec) with serine, to form the misacylated tRNA L-seryl-tRNA(Sec), which will be further converted into selenocysteinyl-tRNA(Sec). The sequence is that of Serine--tRNA ligase from Xylella fastidiosa (strain M12).